The following is a 101-amino-acid chain: Small ribosomal subunit protein uS14 (101 aa).

This sequence belongs to the universal ribosomal protein uS14 family. As to quaternary structure, part of the 30S ribosomal subunit. Contacts proteins S3 and S10.

Binds 16S rRNA, required for the assembly of 30S particles and may also be responsible for determining the conformation of the 16S rRNA at the A site. This is Small ribosomal subunit protein uS14 from Shewanella amazonensis (strain ATCC BAA-1098 / SB2B).